We begin with the raw amino-acid sequence, 1368 residues long: DNA-directed RNA polymerase subunit beta (1368 aa).

This sequence belongs to the RNA polymerase beta chain family. As to quaternary structure, the RNAP catalytic core consists of 2 alpha, 1 beta, 1 beta' and 1 omega subunit. When a sigma factor is associated with the core the holoenzyme is formed, which can initiate transcription.

It catalyses the reaction RNA(n) + a ribonucleoside 5'-triphosphate = RNA(n+1) + diphosphate. DNA-dependent RNA polymerase catalyzes the transcription of DNA into RNA using the four ribonucleoside triphosphates as substrates. This chain is DNA-directed RNA polymerase subunit beta, found in Burkholderia pseudomallei (strain K96243).